We begin with the raw amino-acid sequence, 306 residues long: MVPPREDVTVRIVCERRRTAGKEARPPPSAKPTPGNTSSHPNAKETHRSNEPFFRLYTKQSHRRSIMASTLCVVLGSASSTDPAAISAATMTDAAAKTIHDAIYESLELVVVASELADVYDSMELSRFTKILSPNATVSVSVIGDATKSLSPIHTSFLLAGLANNSERRNADGSRTLTATRRNNTTNSVATLNFASNNNNGNDLLIDEDNLLTDASNLLGAPPSMSAAATKSGDDCSGRAPCDDCTCGRAEGAKEGNSEQPKEIKSSSCGKCSLGDAFRCASCPYLGKPAFKPGEEHLVLDLQDDF.

Positions 1-25 are enriched in basic and acidic residues; that stretch reads MVPPREDVTVRIVCERRRTAGKEAR. The tract at residues 1–51 is disordered; it reads MVPPREDVTVRIVCERRRTAGKEARPPPSAKPTPGNTSSHPNAKETHRSNE. The N-terminal SAM-like domain stretch occupies residues 59 to 190; that stretch reads KQSHRRSIMA…RRNNTTNSVA (132 aa). A linker region spans residues 191-218; the sequence is TLNFASNNNNGNDLLIDEDNLLTDASNL. [2Fe-2S] cluster-binding residues include C236, C242, C245, and C247. The tract at residues 236 to 247 is fe-S binding site A; that stretch reads CSGRAPCDDCTC. Residues 252–265 show a composition bias toward basic and acidic residues; sequence GAKEGNSEQPKEIK. Residues 252–272 are disordered; that stretch reads GAKEGNSEQPKEIKSSSCGKC. Positions 269, 272, 280, and 283 each coordinate [4Fe-4S] cluster. 2 short sequence motifs (cx2C motif) span residues 269–272 and 280–283; these read CGKC and CASC. Residues 269 to 283 are fe-S binding site B; that stretch reads CGKCSLGDAFRCASC.

Belongs to the anamorsin family. As to quaternary structure, monomer. It depends on [2Fe-2S] cluster as a cofactor. [4Fe-4S] cluster serves as cofactor.

It is found in the cytoplasm. The protein resides in the mitochondrion intermembrane space. Functionally, component of the cytosolic iron-sulfur (Fe-S) protein assembly (CIA) machinery. Required for the maturation of extramitochondrial Fe-S proteins. Part of an electron transfer chain functioning in an early step of cytosolic Fe-S biogenesis, facilitating the de novo assembly of a [4Fe-4S] cluster on the cytosolic Fe-S scaffold complex. Electrons are transferred from NADPH via a FAD- and FMN-containing diflavin oxidoreductase. Together with the diflavin oxidoreductase, also required for the assembly of the diferric tyrosyl radical cofactor of ribonucleotide reductase (RNR), probably by providing electrons for reduction during radical cofactor maturation in the catalytic small subunit. This is Anamorsin homolog from Phaeodactylum tricornutum (strain CCAP 1055/1).